Consider the following 195-residue polypeptide: Probable GTP-binding protein EngB (195 aa).

Positions 24–195 (DWPEIALAGR…EAWEAILRYL (172 aa)) constitute an EngB-type G domain. GTP-binding positions include 32 to 39 (GRSNVGKS), 59 to 63 (GKTQL), 77 to 80 (DVPG), 144 to 147 (TKAD), and 176 to 178 (FSS). S39 and T61 together coordinate Mg(2+).

This sequence belongs to the TRAFAC class TrmE-Era-EngA-EngB-Septin-like GTPase superfamily. EngB GTPase family. Mg(2+) serves as cofactor.

Necessary for normal cell division and for the maintenance of normal septation. In Lactococcus lactis subsp. lactis (strain IL1403) (Streptococcus lactis), this protein is Probable GTP-binding protein EngB.